We begin with the raw amino-acid sequence, 545 residues long: CTP synthase (545 aa).

The tract at residues 1–266 (MATNYIFVTG…DTFVCDRFRL (266 aa)) is amidoligase domain. Ser14 serves as a coordination point for CTP. Ser14 is a UTP binding site. Residues 15-20 (SLGKGI) and Asp72 contribute to the ATP site. 2 residues coordinate Mg(2+): Asp72 and Glu140. CTP-binding positions include 147–149 (DIE), 187–192 (KTKPTQ), and Lys223. UTP-binding positions include 187–192 (KTKPTQ) and Lys223. ATP is bound at residue 239-241 (KDV). Positions 291-542 (TIGMVGKYVE…VAAAKAYQDS (252 aa)) constitute a Glutamine amidotransferase type-1 domain. Gly352 contacts L-glutamine. Cys379 serves as the catalytic Nucleophile; for glutamine hydrolysis. L-glutamine-binding positions include 380 to 383 (LGMQ), Glu403, and Arg470. Residues His515 and Glu517 contribute to the active site.

This sequence belongs to the CTP synthase family. As to quaternary structure, homotetramer.

It carries out the reaction UTP + L-glutamine + ATP + H2O = CTP + L-glutamate + ADP + phosphate + 2 H(+). It catalyses the reaction L-glutamine + H2O = L-glutamate + NH4(+). The catalysed reaction is UTP + NH4(+) + ATP = CTP + ADP + phosphate + 2 H(+). It participates in pyrimidine metabolism; CTP biosynthesis via de novo pathway; CTP from UDP: step 2/2. Allosterically activated by GTP, when glutamine is the substrate; GTP has no effect on the reaction when ammonia is the substrate. The allosteric effector GTP functions by stabilizing the protein conformation that binds the tetrahedral intermediate(s) formed during glutamine hydrolysis. Inhibited by the product CTP, via allosteric rather than competitive inhibition. In terms of biological role, catalyzes the ATP-dependent amination of UTP to CTP with either L-glutamine or ammonia as the source of nitrogen. Regulates intracellular CTP levels through interactions with the four ribonucleotide triphosphates. The sequence is that of CTP synthase from Actinobacillus pleuropneumoniae serotype 5b (strain L20).